We begin with the raw amino-acid sequence, 359 residues long: 4-galactosyl-N-acetylglucosaminide 3-alpha-L-fucosyltransferase 9 (359 aa).

At 1–11 the chain is on the cytoplasmic side; that stretch reads MTSASKGILRP. Residues 12–32 form a helical; Signal-anchor for type II membrane protein membrane-spanning segment; it reads FLIVCIILACSMVCLFIYIKP. Topologically, residues 33-359 are lumenal; sequence TNSWIFSPME…VGNLEKWFWN (327 aa). Asparagine 62 carries N-linked (GlcNAc...) asparagine glycosylation. Residues 63–168 form an acceptor-binding region; it reads ETTILIWVWP…RRDSDIQVPY (106 aa). Glutamine 75 serves as a coordination point for a beta-D-galactosyl-(1-&gt;4)-N-acetyl-beta-D-glucosaminyl derivative. Disulfide bonds link cysteine 82/cysteine 335, cysteine 91/cysteine 338, and cysteine 190/cysteine 238. Asparagine 101 carries N-linked (GlcNAc...) asparagine glycosylation. Residue glutamate 137 coordinates a beta-D-galactosyl-(1-&gt;4)-N-acetyl-beta-D-glucosaminyl derivative. Catalysis depends on glutamate 137, which acts as the Nucleophile. Glutamate 137 contacts GDP-beta-L-fucose. The N-linked (GlcNAc...) asparagine glycan is linked to asparagine 153. The GDP-beta-L-fucose site is built by tyrosine 168, valine 192, serine 194, asparagine 195, arginine 202, valine 226, tyrosine 241, asparagine 246, tyrosine 252, glutamate 255, and lysine 256. Residues 169 to 326 form a donor-binding region; it reads GFLTVSTNPF…NWRKDFTVNL (158 aa). The segment at 327–359 is acceptor-binding; that stretch reads PRFWESHACLACDHVKRHQEYKSVGNLEKWFWN.

Belongs to the glycosyltransferase 10 family. In terms of assembly, homodimer. N-glycosylated with complex-type N-glycans.

The protein localises to the golgi apparatus. It is found in the trans-Golgi network membrane. The protein resides in the golgi apparatus membrane. The catalysed reaction is a beta-D-galactosyl-(1-&gt;4)-N-acetyl-beta-D-glucosaminyl derivative + GDP-beta-L-fucose = a beta-D-galactosyl-(1-&gt;4)-[alpha-L-fucosyl-(1-&gt;3)]-N-acetyl-beta-D-glucosaminyl derivative + GDP + H(+). It carries out the reaction an alpha-Neu5Ac-(2-&gt;3)-beta-D-Gal-(1-&gt;4)-beta-D-GlcNAc-(1-&gt;3)-beta-D-Gal-(1-&gt;4)-beta-D-GlcNAc derivative + GDP-beta-L-fucose = an alpha-Neu5Ac-(2-&gt;3)-beta-D-Gal-(1-&gt;4)-beta-D-GlcNAc-(1-&gt;3)-beta-D-Gal-(1-&gt;4)-[alpha-L-Fuc-(1-&gt;3)]-beta-D-GlcNAc derivative + GDP + H(+). It catalyses the reaction alpha-N-glycoloylneuraminosyl-(2-&gt;3)-beta-D-galactosyl-(1-&gt;4)-N-acetyl-beta-D-glucosaminyl-(1-&gt;3)-beta-D-galactosyl-(1-&gt;4)-N-acetyl-beta-D-glucosaminyl-(1-&gt;3)-beta-D-galactosyl-(1-&gt;4)-beta-D-glucosyl-(1&lt;-&gt;1')-ceramide + GDP-beta-L-fucose = alpha-N-glycoloylneuraminosyl-(2-&gt;3)-beta-D-galactosyl-(1-&gt;4)-N-acetyl-beta-D-glucosaminyl-(1-&gt;3)-beta-D-galactosyl-(1-&gt;4)-[alpha-L-fucosyl-(1-&gt;3)]-N-acetyl-beta-D-glucosaminyl-(1-&gt;3)-beta-D-galactosyl-(1-&gt;4)-beta-D-glucosyl-(1&lt;-&gt;1')-ceramide + GDP + H(+). The enzyme catalyses alpha-D-galactosyl-(1-&gt;3)-beta-D-galactosyl-(1-&gt;4)-N-acetyl-beta-D-glucosaminyl-(1-&gt;3)-beta-D-galactosyl-(1-&gt;4)-beta-D-glucosyl-(1&lt;-&gt;1')-ceramide + GDP-beta-L-fucose = a neolactoside IV(3)-alpha-Gal,III(3)-alpha-Fuc-nLc4Cer + GDP + H(+). The catalysed reaction is a neolactoside nLc4Cer + GDP-beta-L-fucose = a neolactoside III(3)-alpha-Fuc-nLc4Cer + GDP + H(+). It carries out the reaction an N-acetyl-alpha-neuraminyl-(2-&gt;3)-beta-D-galactosyl-(1-&gt;4)-N-acetyl-beta-D-glucosaminyl derivative + GDP-beta-L-fucose = an alpha-Neu5Ac-(2-&gt;3)-beta-D-Gal-(1-&gt;4)-[alpha-L-Fuc-(1-&gt;3)]-beta-D-GlcNAc derivative + GDP + H(+). It catalyses the reaction beta-D-Gal-(1-&gt;4)-beta-D-GlcNAc-(1-&gt;3)-beta-D-Gal-(1-&gt;4)-D-Glc + GDP-beta-L-fucose = beta-D-Gal-(1-&gt;4)-[alpha-L-Fuc-(1-&gt;3)]-beta-D-GlcNAc-(1-&gt;3)-beta-D-Gal-(1-&gt;4)-D-Glc + GDP + H(+). The enzyme catalyses an alpha-L-Fuc-(1-&gt;2)-beta-D-Gal-(1-&gt;4)-beta-D-GlcNAc derivative + GDP-beta-L-fucose = an alpha-L-Fuc-(1-&gt;2)-beta-D-Gal-(1-&gt;4)-[alpha-L-Fuc-(1-&gt;3)]-beta-D-GlcNAc derivative + GDP + H(+). The protein operates within protein modification; protein glycosylation. Its pathway is glycolipid biosynthesis. Its activity is regulated as follows. Activated by Mn2+. Catalyzes alpha(1-&gt;3) linkage of fucosyl moiety transferred from GDP-beta-L-fucose to N-acetyl glucosamine (GlcNAc) within type 2 lactosamine (LacNAc, beta-D-Gal-(1-&gt;4)-beta-D-GlcNAc-) glycan attached to glycolipids and N- or O-linked glycoproteins. Fucosylates distal type 2 LacNAc and its fucosylated (H-type 2 LacNAc) and sialylated (sialyl-type 2 LacNAc) derivatives to form Lewis x (Lex) (CD15) and Lewis y (Ley) antigenic epitopes involved in cell adhesion and differentiation. Generates Lex epitopes in the brain, presumably playing a role in the maintenance of neuronal stemness and neurite outgrowth in progenitor neural cells. Fucosylates the internal type 2 LacNAc unit of the polylactosamine chain to form VIM-2 antigen that serves as recognition epitope for SELE. Can also modify milk oligosaccharides in particular type 2 tetrasaccharide LNnT. The chain is 4-galactosyl-N-acetylglucosaminide 3-alpha-L-fucosyltransferase 9 from Bos taurus (Bovine).